Here is a 448-residue protein sequence, read N- to C-terminus: Multiple inositol polyphosphate phosphatase 1 (448 aa).

Residues 1–19 (MAPRRAACLLPLLVAVASA) form the signal peptide. Residue histidine 69 is part of the active site. Asparagine 203, asparagine 257, asparagine 409, and asparagine 441 each carry an N-linked (GlcNAc...) asparagine glycan. The short motif at 445-448 (ADEL) is the Prevents secretion from ER element.

Belongs to the histidine acid phosphatase family. MINPP1 subfamily. In terms of processing, N-glycosylated. Present in growth plate chondrocytes but not detectable in articular chondrocytes (at protein level). Spatially restricted to chondrocytes in the lower portion of the proliferative zone and the upper portion of the hypertrophic zone in the growth plate of long bones (at protein level). Weakly expressed in kidney, liver, lung, skin and spleen, and not detected in brain, heart and muscle.

The protein localises to the endoplasmic reticulum lumen. It is found in the secreted. Its subcellular location is the cell membrane. The catalysed reaction is 1D-myo-inositol hexakisphosphate + H2O = 1D-myo-inositol 1,2,4,5,6-pentakisphosphate + phosphate. The enzyme catalyses 1D-myo-inositol 1,2,4,5,6-pentakisphosphate + H2O = 1D-myo-inositol 1,2,5,6-tetrakisphosphate + phosphate. It catalyses the reaction 1D-myo-inositol 1,2,5,6-tetrakisphosphate + H2O = 1D-myo-inositol 1,2,6-trisphosphate + phosphate. It carries out the reaction 1D-myo-inositol 1,2,6-trisphosphate + H2O = 1D-myo-inositol 1,2-bisphosphate + phosphate. The catalysed reaction is 1D-myo-inositol 1,2-bisphosphate + H2O = 1D-myo-inositol 2-phosphate + phosphate. The enzyme catalyses 1D-myo-inositol hexakisphosphate + H2O = 1D-myo-inositol 1,2,3,5,6-pentakisphosphate + phosphate. It catalyses the reaction 1D-myo-inositol 1,2,3,5,6-pentakisphosphate + H2O = 1D-myo-inositol 1,2,3,6-tetrakisphosphate + phosphate. It carries out the reaction 1D-myo-inositol 1,2,3,6-tetrakisphosphate + H2O = 1D-myo-inositol 1,2,3-trisphosphate + phosphate. The catalysed reaction is 1D-myo-inositol 1,2,3-trisphosphate + H2O = 1D-myo-inositol 2,3-bisphosphate + phosphate. The enzyme catalyses 1D-myo-inositol 2,3-bisphosphate + H2O = 1D-myo-inositol 2-phosphate + phosphate. It catalyses the reaction 1D-myo-inositol 1,3,4,5,6-pentakisphosphate + H2O = 1D-myo-inositol 1,4,5,6-tetrakisphosphate + phosphate. It carries out the reaction 1D-myo-inositol 1,4,5,6-tetrakisphosphate + H2O = 1D-myo-inositol 1,4,5-trisphosphate + phosphate. The catalysed reaction is (2R)-2,3-bisphosphoglycerate + H2O = (2R)-2-phosphoglycerate + phosphate. Multiple inositol polyphosphate phosphatase that hydrolyzes 1D-myo-inositol 1,3,4,5,6-pentakisphosphate (InsP5[2OH]) and 1D-myo-inositol hexakisphosphate (InsP6) to a range of less phosphorylated inositol phosphates. This regulates the availability of these various small molecule second messengers and metal chelators which control many aspects of cell physiology. Has a weak in vitro activity towards 1D-myo-inositol 1,4,5-trisphosphate which is unlikely to be physiologically relevant. By regulating intracellular inositol polyphosphates pools, which act as metal chelators, it may control the availability of intracellular calcium and iron, which are important for proper neuronal development and homeostasis. May have a dual substrate specificity, and function as a 2,3-bisphosphoglycerate 3-phosphatase hydrolyzing 2,3-bisphosphoglycerate to 2-phosphoglycerate. 2,3-bisphosphoglycerate (BPG) is formed as part of the Rapoport-Luebering glycolytic bypass and is a regulator of systemic oxygen homeostasis as the major allosteric effector of hemoglobin. The sequence is that of Multiple inositol polyphosphate phosphatase 1 (MINPP1) from Gallus gallus (Chicken).